We begin with the raw amino-acid sequence, 211 residues long: Protein U63 (211 aa).

This sequence belongs to the herpesviridae UL92 family.

This is Protein U63 (U63) from Human herpesvirus 7 (strain JI) (HHV-7).